Here is a 366-residue protein sequence, read N- to C-terminus: tRNA (guanine(26)-N(2))-dimethyltransferase (366 aa).

The segment at 1-28 (MEVSEGSVTVEVPEERHGASEGSGEGVF) is disordered. In terms of domain architecture, Trm1 methyltransferase spans 1–365 (MEVSEGSVTV…ADVADIRNAV (365 aa)). The S-adenosyl-L-methionine site is built by R37, R64, and D79. Zn(2+)-binding residues include C234, C237, C254, and C257.

Belongs to the class I-like SAM-binding methyltransferase superfamily. Trm1 family.

The enzyme catalyses guanosine(26) in tRNA + 2 S-adenosyl-L-methionine = N(2)-dimethylguanosine(26) in tRNA + 2 S-adenosyl-L-homocysteine + 2 H(+). In terms of biological role, dimethylates a single guanine residue at position 26 of a number of tRNAs using S-adenosyl-L-methionine as donor of the methyl groups. The chain is tRNA (guanine(26)-N(2))-dimethyltransferase from Natronomonas pharaonis (strain ATCC 35678 / DSM 2160 / CIP 103997 / JCM 8858 / NBRC 14720 / NCIMB 2260 / Gabara) (Halobacterium pharaonis).